The sequence spans 345 residues: Protoheme IX farnesyltransferase (345 aa).

The next 9 membrane-spanning stretches (helical) occupy residues 33 to 53 (VMSL…TPIH), 54 to 74 (PLLG…SGAL), 105 to 125 (ATLG…AINW), 126 to 146 (LAAG…TMWL), 154 to 174 (IVIG…AATG), 182 to 202 (LMVL…SLYI), 226 to 246 (QILL…FTGL), 247 to 267 (GGWL…TLAV), and 315 to 335 (ILYL…GLPI).

Belongs to the UbiA prenyltransferase family. Protoheme IX farnesyltransferase subfamily.

The protein resides in the cell inner membrane. The enzyme catalyses heme b + (2E,6E)-farnesyl diphosphate + H2O = Fe(II)-heme o + diphosphate. The protein operates within porphyrin-containing compound metabolism; heme O biosynthesis; heme O from protoheme: step 1/1. Its function is as follows. Converts heme B (protoheme IX) to heme O by substitution of the vinyl group on carbon 2 of heme B porphyrin ring with a hydroxyethyl farnesyl side group. In Caulobacter sp. (strain K31), this protein is Protoheme IX farnesyltransferase.